The chain runs to 432 residues: MQVSVETTQGLGRRVTITIAADSIETAVKSELVNVAKKVRIDGFRKGKVPMNVVAQRYGASVRQDVLGDLMSRNFVDAIIKEKINPAGAPNYVPGEYKLGEDFTYAVEFEVYPEVELTGLESIEVEKPVVEVTDADVDVMLDTLRKQQATWKDKDGAADAEDRVTIDFTGSVDGEEFEGGKASDFVLAMGQGRMIPGFEDGIKGHKAGEEFTIDVTFPEEYHAENLKGKAAKFAINLKKVEERELPELTEEFIKRFGVEDGSVAGLRTEVRKNMERELKGAVRNRVKSQAIEGLVKANDIDVPSALIDSEVDVLRRQAAQRFGGNEKQALELPRELFEEQAKRRVVVGLLLGEVIRTQELKADEERVKGLIEEMASAYEDPKEVIEFYSKNKELMDNMRNVALEEQAVEAVLAKAKVTEKATSFNELMNQQA.

The 86-residue stretch at Glu-161 to Pro-246 folds into the PPIase FKBP-type domain.

Belongs to the FKBP-type PPIase family. Tig subfamily.

It is found in the cytoplasm. The catalysed reaction is [protein]-peptidylproline (omega=180) = [protein]-peptidylproline (omega=0). Involved in protein export. Acts as a chaperone by maintaining the newly synthesized protein in an open conformation. Functions as a peptidyl-prolyl cis-trans isomerase. This chain is Trigger factor, found in Citrobacter koseri (strain ATCC BAA-895 / CDC 4225-83 / SGSC4696).